Reading from the N-terminus, the 195-residue chain is Pyruvoyl-dependent arginine decarboxylase AaxB (195 aa).

Residue serine 53 is modified to Pyruvic acid (Ser).

This sequence belongs to the pyruvoyl-dependent arginine decarboxylase family. As to quaternary structure, trimer of an alpha-beta dimer. Pyruvate is required as a cofactor.

It is found in the cytoplasm. The enzyme catalyses L-arginine + H(+) = agmatine + CO2. In terms of biological role, part of the AaxABC system, catalyzes the decarboxylation of L-arginine. The arginine uptake by the bacterium in the macrophage may be a virulence factor against the host innate immune response. The chain is Pyruvoyl-dependent arginine decarboxylase AaxB (aaxB) from Chlamydia muridarum (strain MoPn / Nigg).